We begin with the raw amino-acid sequence, 586 residues long: Serine/threonine-protein kinase TDA1 (586 aa).

The segment at 1–26 (MTTASSSASQLQQRLPEEKPWPQLSG) is disordered. The 313-residue stretch at 39-351 (VTNHNSLGDG…AKNLKQHPFI (313 aa)) folds into the Protein kinase domain. ATP contacts are provided by residues 45–53 (LGDGNFSVV) and Lys-68. Residue Asp-180 is the Proton acceptor of the active site. The tract at residues 503–524 (TTPESRSNFNTPKTLSRQGSST) is disordered. Thr-504 is modified (phosphothreonine). A phosphoserine mark is found at Ser-509 and Ser-518. Position 538 is a phosphothreonine (Thr-538). Ser-578 bears the Phosphoserine mark.

This sequence belongs to the protein kinase superfamily. Ser/Thr protein kinase family. As to quaternary structure, interacts with RIM11.

Its subcellular location is the cytoplasm. It is found in the nucleus. The enzyme catalyses L-seryl-[protein] + ATP = O-phospho-L-seryl-[protein] + ADP + H(+). It catalyses the reaction L-threonyl-[protein] + ATP = O-phospho-L-threonyl-[protein] + ADP + H(+). Serine/threonine protein kinase shown to have protein phosphorylation activity in vitro. The polypeptide is Serine/threonine-protein kinase TDA1 (TDA1) (Saccharomyces cerevisiae (strain ATCC 204508 / S288c) (Baker's yeast)).